The primary structure comprises 166 residues: NAD(P)H-quinone oxidoreductase subunit I, chloroplastic (166 aa).

2 consecutive 4Fe-4S ferredoxin-type domains span residues 55 to 84 and 95 to 124; these read GRIHFEFDKCIACEVCVRVCPIDLPVVDWK and LNYSIDFGICIFCGNCVEYCPTNCLSMTEE. [4Fe-4S] cluster-binding residues include Cys64, Cys67, Cys70, Cys74, Cys104, Cys107, Cys110, and Cys114.

Belongs to the complex I 23 kDa subunit family. In terms of assembly, NDH is composed of at least 16 different subunits, 5 of which are encoded in the nucleus. It depends on [4Fe-4S] cluster as a cofactor.

It is found in the plastid. Its subcellular location is the chloroplast thylakoid membrane. It catalyses the reaction a plastoquinone + NADH + (n+1) H(+)(in) = a plastoquinol + NAD(+) + n H(+)(out). The enzyme catalyses a plastoquinone + NADPH + (n+1) H(+)(in) = a plastoquinol + NADP(+) + n H(+)(out). Functionally, NDH shuttles electrons from NAD(P)H:plastoquinone, via FMN and iron-sulfur (Fe-S) centers, to quinones in the photosynthetic chain and possibly in a chloroplast respiratory chain. The immediate electron acceptor for the enzyme in this species is believed to be plastoquinone. Couples the redox reaction to proton translocation, and thus conserves the redox energy in a proton gradient. The chain is NAD(P)H-quinone oxidoreductase subunit I, chloroplastic from Raillardella argentea (Silky raillardella).